We begin with the raw amino-acid sequence, 172 residues long: 3-hydroxydecanoyl-[acyl-carrier-protein] dehydratase (172 aa).

Residue H71 is part of the active site.

This sequence belongs to the thioester dehydratase family. FabA subfamily. In terms of assembly, homodimer.

The protein resides in the cytoplasm. It catalyses the reaction a (3R)-hydroxyacyl-[ACP] = a (2E)-enoyl-[ACP] + H2O. It carries out the reaction (3R)-hydroxydecanoyl-[ACP] = (2E)-decenoyl-[ACP] + H2O. The enzyme catalyses (2E)-decenoyl-[ACP] = (3Z)-decenoyl-[ACP]. Its pathway is lipid metabolism; fatty acid biosynthesis. Functionally, necessary for the introduction of cis unsaturation into fatty acids. Catalyzes the dehydration of (3R)-3-hydroxydecanoyl-ACP to E-(2)-decenoyl-ACP and then its isomerization to Z-(3)-decenoyl-ACP. Can catalyze the dehydratase reaction for beta-hydroxyacyl-ACPs with saturated chain lengths up to 16:0, being most active on intermediate chain length. This is 3-hydroxydecanoyl-[acyl-carrier-protein] dehydratase from Serratia proteamaculans (strain 568).